The following is a 431-amino-acid chain: MGKNVVVLGTQWGDEGKGKIVDLLTEQAAAVVRYQGGHNAGHTLVIDGEKTVLHLIPSGILREGVECLIGNGVVVAPDALLREITKLEEKGVPVRQRLRISPACPLILSYHVALDQAREKARGDAKIGTTGRGIGPAYEDKVARRGLRVGDLFHRERFAAKLGELLDYHNFQLVNFYKEPAIDFQKTLDECMEYAELLKPMMADVTAVLHDLRREGKDIMFEGAQGSLLDIDHGTYPYVTSSNTTAGGIATGSGFGPLYLNYILGITKAYTTRVGSGPFPTELFDDVGAFLAKRGHEFGATTGRARRCGWFDAVILRRAIEINSISGLCLTKLDVLDGLETIRICTGYKDANGQVLVDAPTDADSYLGLQPVYEEMPGWSESTLGAKTLEDLPAAARAYIKRVEELVGAPIDIISTGPDRNETIVLRHPFA.

GTP contacts are provided by residues 13-19 (GDEGKGK) and 41-43 (GHT). The active-site Proton acceptor is the D14. Residues D14 and G41 each contribute to the Mg(2+) site. IMP is bound by residues 14-17 (DEGK), 39-42 (NAGH), T130, R144, Q225, T240, and R304. The active-site Proton donor is H42. A substrate-binding site is contributed by 300-306 (ATTGRAR). Residues R306, 332 to 334 (KLD), and 415 to 417 (STG) contribute to the GTP site.

This sequence belongs to the adenylosuccinate synthetase family. In terms of assembly, homodimer. Mg(2+) serves as cofactor.

It localises to the cytoplasm. The catalysed reaction is IMP + L-aspartate + GTP = N(6)-(1,2-dicarboxyethyl)-AMP + GDP + phosphate + 2 H(+). It participates in purine metabolism; AMP biosynthesis via de novo pathway; AMP from IMP: step 1/2. Its function is as follows. Plays an important role in the de novo pathway of purine nucleotide biosynthesis. Catalyzes the first committed step in the biosynthesis of AMP from IMP. This Ectopseudomonas mendocina (strain ymp) (Pseudomonas mendocina) protein is Adenylosuccinate synthetase.